Reading from the N-terminus, the 143-residue chain is Lutropin subunit beta (143 aa).

Positions 1-22 are cleaved as a signal peptide; that stretch reads MEMLQGLLLLWLLLLNVGGVWT. Cystine bridges form between cysteine 31/cysteine 79, cysteine 45/cysteine 94, cysteine 48/cysteine 132, cysteine 56/cysteine 110, cysteine 60/cysteine 112, and cysteine 115/cysteine 122. N-linked (GlcNAc...) asparagine glycosylation occurs at asparagine 35.

It belongs to the glycoprotein hormones subunit beta family. As to quaternary structure, heterodimer of a common alpha chain and a unique beta chain which confers biological specificity to thyrotropin, lutropin, follitropin and gonadotropin.

Its subcellular location is the secreted. Promotes spermatogenesis and ovulation by stimulating the testes and ovaries to synthesize steroids. The chain is Lutropin subunit beta (LHB) from Felis catus (Cat).